We begin with the raw amino-acid sequence, 264 residues long: Thymidylate synthase (264 aa).

Arg21 provides a ligand contact to dUMP. His51 serves as a coordination point for (6R)-5,10-methylene-5,6,7,8-tetrahydrofolate. 126 to 127 (RR) contacts dUMP. Residue Cys146 is the Nucleophile of the active site. DUMP contacts are provided by residues 166-169 (RSAD), Asn177, and 207-209 (HLY). A (6R)-5,10-methylene-5,6,7,8-tetrahydrofolate-binding site is contributed by Asp169. (6R)-5,10-methylene-5,6,7,8-tetrahydrofolate is bound at residue Ala263.

It belongs to the thymidylate synthase family. Bacterial-type ThyA subfamily. Homodimer.

It is found in the cytoplasm. The catalysed reaction is dUMP + (6R)-5,10-methylene-5,6,7,8-tetrahydrofolate = 7,8-dihydrofolate + dTMP. The protein operates within pyrimidine metabolism; dTTP biosynthesis. Functionally, catalyzes the reductive methylation of 2'-deoxyuridine-5'-monophosphate (dUMP) to 2'-deoxythymidine-5'-monophosphate (dTMP) while utilizing 5,10-methylenetetrahydrofolate (mTHF) as the methyl donor and reductant in the reaction, yielding dihydrofolate (DHF) as a by-product. This enzymatic reaction provides an intracellular de novo source of dTMP, an essential precursor for DNA biosynthesis. This is Thymidylate synthase from Legionella pneumophila (strain Corby).